A 219-amino-acid chain; its full sequence is Orotate phosphoribosyltransferase (219 aa).

Residue Lys-26 coordinates 5-phospho-alpha-D-ribose 1-diphosphate. 34–35 (FF) contributes to the orotate binding site. Residues 72-73 (YK), Arg-98, Lys-99, Lys-102, His-104, and 124-132 (DDVITAGTA) contribute to the 5-phospho-alpha-D-ribose 1-diphosphate site. Orotate contacts are provided by Thr-128 and Arg-156.

The protein belongs to the purine/pyrimidine phosphoribosyltransferase family. PyrE subfamily. Homodimer. Mg(2+) is required as a cofactor.

The enzyme catalyses orotidine 5'-phosphate + diphosphate = orotate + 5-phospho-alpha-D-ribose 1-diphosphate. It participates in pyrimidine metabolism; UMP biosynthesis via de novo pathway; UMP from orotate: step 1/2. Catalyzes the transfer of a ribosyl phosphate group from 5-phosphoribose 1-diphosphate to orotate, leading to the formation of orotidine monophosphate (OMP). The sequence is that of Orotate phosphoribosyltransferase from Xanthomonas oryzae pv. oryzae (strain MAFF 311018).